Here is a 410-residue protein sequence, read N- to C-terminus: MTSPIHVMSEIGKLKTVMLKRPNVEVENFTPDMMERLLFDDIPYLPIAQQEHDNFAETLRQNGTEVLYLEQLSAEALDDGGEEVKLNFLEQMLAESGYVAGVTHDALKEYLLSLDTQAMVNKIMGGVRKNELDFVPADLVSAAEEDDYPFFMDPMPNLYFTRDPAASIGDGLSINHMTFAARQRESLFMETIIKYHHRFANKGLNVWRDRNHDTRIEGGDELVLSDHVLAIGVSQRTSADAIEDIARNLFAKSHFDKVIAIKIPHNHAMMHLDTVFTMINTDQFTVHPGILGEGGHIDTWTITPGKDGQLSLDHQTDLKKVLKDALNLDDLDLIPTGNGDPIIAGREQWNDGSNTLAIAPGVVVTYNRNYVSNELLRKHGLKVIDVLSSELSRGRGGPRCMSMPLVREDL.

C400 (amidino-cysteine intermediate) is an active-site residue.

Belongs to the arginine deiminase family.

It is found in the cytoplasm. It catalyses the reaction L-arginine + H2O = L-citrulline + NH4(+). It functions in the pathway amino-acid degradation; L-arginine degradation via ADI pathway; carbamoyl phosphate from L-arginine: step 1/2. In Levilactobacillus brevis (strain ATCC 367 / BCRC 12310 / CIP 105137 / JCM 1170 / LMG 11437 / NCIMB 947 / NCTC 947) (Lactobacillus brevis), this protein is Arginine deiminase.